Consider the following 462-residue polypeptide: Exodeoxyribonuclease 7 large subunit (462 aa).

It belongs to the XseA family. In terms of assembly, heterooligomer composed of large and small subunits.

It localises to the cytoplasm. The enzyme catalyses Exonucleolytic cleavage in either 5'- to 3'- or 3'- to 5'-direction to yield nucleoside 5'-phosphates.. Its function is as follows. Bidirectionally degrades single-stranded DNA into large acid-insoluble oligonucleotides, which are then degraded further into small acid-soluble oligonucleotides. This Proteus mirabilis (strain HI4320) protein is Exodeoxyribonuclease 7 large subunit.